Reading from the N-terminus, the 116-residue chain is Ig heavy chain V region 441 (116 aa).

The signal sequence occupies residues 1 to 18; sequence MDFGLIFFIVALLKGVQC. The 98-residue stretch at 19 to 116 folds into the Ig-like domain; that stretch reads EVKLLESGGG…EDTALYYCAR (98 aa).

The chain is Ig heavy chain V region 441 from Mus musculus (Mouse).